A 264-amino-acid chain; its full sequence is Acyl-[acyl-carrier-protein]--UDP-N-acetylglucosamine O-acyltransferase (264 aa).

This sequence belongs to the transferase hexapeptide repeat family. LpxA subfamily. As to quaternary structure, homotrimer.

Its subcellular location is the cytoplasm. The catalysed reaction is a (3R)-hydroxyacyl-[ACP] + UDP-N-acetyl-alpha-D-glucosamine = a UDP-3-O-[(3R)-3-hydroxyacyl]-N-acetyl-alpha-D-glucosamine + holo-[ACP]. It participates in glycolipid biosynthesis; lipid IV(A) biosynthesis; lipid IV(A) from (3R)-3-hydroxytetradecanoyl-[acyl-carrier-protein] and UDP-N-acetyl-alpha-D-glucosamine: step 1/6. Involved in the biosynthesis of lipid A, a phosphorylated glycolipid that anchors the lipopolysaccharide to the outer membrane of the cell. In Rickettsia peacockii (strain Rustic), this protein is Acyl-[acyl-carrier-protein]--UDP-N-acetylglucosamine O-acyltransferase.